The sequence spans 103 residues: Large ribosomal subunit protein bL21 (103 aa).

It belongs to the bacterial ribosomal protein bL21 family. In terms of assembly, part of the 50S ribosomal subunit. Contacts protein L20.

Functionally, this protein binds to 23S rRNA in the presence of protein L20. The sequence is that of Large ribosomal subunit protein bL21 from Pectobacterium carotovorum subsp. carotovorum (strain PC1).